Reading from the N-terminus, the 540-residue chain is CTP synthase (540 aa).

Positions 1 to 267 are amidoligase domain; it reads MKIMKFIFIT…GKLVTKKLNL (267 aa). Ser15 lines the CTP pocket. Ser15 is a binding site for UTP. 16–21 contributes to the ATP binding site; the sequence is SLGKGI. L-glutamine is bound at residue Tyr56. Asp73 is a binding site for ATP. Asp73 and Glu141 together coordinate Mg(2+). CTP contacts are provided by residues 148–150, 188–193, and Lys224; these read DIE and KTKPTQ. Residues 188-193 and Lys224 each bind UTP; that span reads KTKPTQ. 240-242 serves as a coordination point for ATP; it reads RDA. The Glutamine amidotransferase type-1 domain maps to 292 to 540; that stretch reads TIGIVGKYVE…VRASLGEKIK (249 aa). Position 360 (Gly360) interacts with L-glutamine. Cys387 (nucleophile; for glutamine hydrolysis) is an active-site residue. L-glutamine-binding positions include 388-391, Glu411, and Arg468; that span reads MGMQ. Catalysis depends on residues His513 and Glu515.

It belongs to the CTP synthase family. Homotetramer.

The catalysed reaction is UTP + L-glutamine + ATP + H2O = CTP + L-glutamate + ADP + phosphate + 2 H(+). It carries out the reaction L-glutamine + H2O = L-glutamate + NH4(+). The enzyme catalyses UTP + NH4(+) + ATP = CTP + ADP + phosphate + 2 H(+). Its pathway is pyrimidine metabolism; CTP biosynthesis via de novo pathway; CTP from UDP: step 2/2. Its activity is regulated as follows. Allosterically activated by GTP, when glutamine is the substrate; GTP has no effect on the reaction when ammonia is the substrate. The allosteric effector GTP functions by stabilizing the protein conformation that binds the tetrahedral intermediate(s) formed during glutamine hydrolysis. Inhibited by the product CTP, via allosteric rather than competitive inhibition. Functionally, catalyzes the ATP-dependent amination of UTP to CTP with either L-glutamine or ammonia as the source of nitrogen. Regulates intracellular CTP levels through interactions with the four ribonucleotide triphosphates. The sequence is that of CTP synthase from Methanocaldococcus jannaschii (strain ATCC 43067 / DSM 2661 / JAL-1 / JCM 10045 / NBRC 100440) (Methanococcus jannaschii).